The chain runs to 231 residues: Androgen-dependent TFPI-regulating protein (231 aa).

Topologically, residues 1 to 7 are cytoplasmic; it reads MTRTTTC. Residues 8–28 form a helical membrane-spanning segment; sequence VYHFLVWNWYIFLNYYIPLIG. At 29–45 the chain is on the extracellular side; the sequence is KDDEKLKEFHDGGRSKY. A helical transmembrane segment spans residues 46-66; it reads LTLLNLLLQAIFFGVACLDDV. Topologically, residues 67–85 are cytoplasmic; the sequence is LKRIIGRKDIKFITSTRDL. A helical transmembrane segment spans residues 86 to 106; the sequence is LFSTLVFPISTFIFLVFWTLF. The Extracellular segment spans residues 107–123; it reads YYDRSLIYPKGLDDYFP. Residues 124–144 form a helical membrane-spanning segment; sequence AWLNHAMHTYILLFVLVETIL. Residues 145-154 are Cytoplasmic-facing; the sequence is RPHHYPSKKL. Residues 155-172 form a helical membrane-spanning segment; sequence GLALLGACNLAYITRVLW. The Extracellular segment spans residues 173–190; it reads RYSQTGNWVYPVFASLNP. Residues 191 to 211 form a helical membrane-spanning segment; sequence LGIIIFFLVCYILNASIYLVG. Over 212-231 the chain is Cytoplasmic; it reads EKINHWKWGATVKPLMKKKK.

Belongs to the AIG1 family. As to expression, highly expressed in flank organs and weakly in testis and earlobes.

Its subcellular location is the cell membrane. It catalyses the reaction 9-hexadecanoyloxy-octadecanoate + H2O = 9-hydroxy-octadecanoate + hexadecanoate + H(+). The catalysed reaction is 12-hexadecanoyloxy-octadecanoate + H2O = 12-hydroxyoctadecanoate + hexadecanoate + H(+). The enzyme catalyses 9-(9Z-hexadecenoyloxy)-octadecanoate + H2O = (9Z)-hexadecenoate + 9-hydroxy-octadecanoate + H(+). It carries out the reaction 12-(9Z-hexadecenoyloxy)-octadecanoate + H2O = 12-hydroxyoctadecanoate + (9Z)-hexadecenoate + H(+). It catalyses the reaction 13-(9Z-hexadecenoyloxy)-octadecanoate + H2O = 13-hydroxy-octadecanoate + (9Z)-hexadecenoate + H(+). The catalysed reaction is 9-octadecanoyloxy-octadecanoate + H2O = 9-hydroxy-octadecanoate + octadecanoate + H(+). The enzyme catalyses 12-octadecanoyloxy-octadecanoate + H2O = 12-hydroxyoctadecanoate + octadecanoate + H(+). It carries out the reaction 13-octadecanoyloxy-octadecanoate + H2O = 13-hydroxy-octadecanoate + octadecanoate + H(+). It catalyses the reaction 9-(9Z-octadecenoyloxy)-octadecanoate + H2O = 9-hydroxy-octadecanoate + (9Z)-octadecenoate + H(+). The catalysed reaction is 12-(9Z-octadecenoyloxy)-octadecanoate + H2O = 12-hydroxyoctadecanoate + (9Z)-octadecenoate + H(+). The enzyme catalyses 13-(9Z-octadecenoyloxy)-octadecanoate + H2O = 13-hydroxy-octadecanoate + (9Z)-octadecenoate + H(+). It carries out the reaction 5-(9Z-octadecenoyloxy)-octadecanoate + H2O = 5-hydroxy-octadecanoate + (9Z)-octadecenoate + H(+). Functionally, hydrolyzes bioactive fatty-acid esters of hydroxy-fatty acids (FAHFAs), but not other major classes of lipids. Shows a preference for FAHFAs with branching distal from the carboxylate head group of the lipids. Regulates the expression and the cell-associated anticoagulant activity of the inhibitor TFPI in endothelial cells (in vitro). This is Androgen-dependent TFPI-regulating protein (ADTRP) from Mesocricetus auratus (Golden hamster).